An 86-amino-acid chain; its full sequence is Weak toxin 2 (86 aa).

The first 23 residues, 1 to 23 (MKTLLLTLVVVAIVCLDLGYTLT), serve as a signal peptide directing secretion. Intrachain disulfides connect C24/C45, C27/C32, C38/C63, C67/C78, and C79/C84.

It belongs to the three-finger toxin family. Ancestral subfamily. Orphan group II sub-subfamily. As to expression, expressed by the venom gland.

The protein resides in the secreted. Functionally, binds with low affinity to muscular (alpha-1-beta-1-delta-epsilon/CHRNA1-CHRNB1-CHRND-CHRNE) and very low affinity to neuronal (alpha-7/CHRNA7) nicotinic acetylcholine receptor (nAChR). The protein is Weak toxin 2 of Bungarus candidus (Malayan krait).